Here is a 554-residue protein sequence, read N- to C-terminus: DM7 family protein GG17593 (554 aa).

The protein belongs to the DM7 family.

The sequence is that of DM7 family protein GG17593 from Drosophila erecta (Fruit fly).